The primary structure comprises 872 residues: Alanine--tRNA ligase (872 aa).

The Zn(2+) site is built by H567, H571, C669, and H673.

Belongs to the class-II aminoacyl-tRNA synthetase family. The cofactor is Zn(2+).

The protein resides in the cytoplasm. The catalysed reaction is tRNA(Ala) + L-alanine + ATP = L-alanyl-tRNA(Ala) + AMP + diphosphate. Its function is as follows. Catalyzes the attachment of alanine to tRNA(Ala) in a two-step reaction: alanine is first activated by ATP to form Ala-AMP and then transferred to the acceptor end of tRNA(Ala). Also edits incorrectly charged Ser-tRNA(Ala) and Gly-tRNA(Ala) via its editing domain. In Streptococcus gordonii (strain Challis / ATCC 35105 / BCRC 15272 / CH1 / DL1 / V288), this protein is Alanine--tRNA ligase.